The sequence spans 299 residues: Non-homologous end joining protein Ku (299 aa).

One can recognise a Ku domain in the interval 10–188; sequence ISFGLVHIPV…TEAVTDARLT (179 aa). Disordered stretches follow at residues 227–249 and 261–299; these read AGEG…SADV and AGKS…GKAS. The span at 273–283 shows a compositional bias: basic and acidic residues; the sequence is AAKDKVADKQS. Residues 284–299 are compositionally biased toward basic residues; sequence PKPKRPAVRKKTGKAS.

It belongs to the prokaryotic Ku family. Homodimer. Interacts with LigD.

Its function is as follows. With LigD forms a non-homologous end joining (NHEJ) DNA repair enzyme, which repairs dsDNA breaks with reduced fidelity. Binds linear dsDNA with 5'- and 3'- overhangs but not closed circular dsDNA nor ssDNA. Recruits and stimulates the ligase activity of LigD. This Pseudomonas syringae pv. tomato (strain ATCC BAA-871 / DC3000) protein is Non-homologous end joining protein Ku.